Here is a 247-residue protein sequence, read N- to C-terminus: MHLLTLHLLLLLLGSSTKAGEIIGGTECIPHSRPYMAYLEIVTSENYLSACSGFLIRRNFVLTAAHCAGRSITVLLGAHNKTSKEDTWQKLEVEKQFLHPKYDENLVVHDIMLLKLKEKAKLTLGVGTLPLSANFNFIPPGRMCRAVGWGRTNVNEPASDTLQEVKMRLQEPQACKHFTSFRHNSQLCVGNPKKMQNVYKGDSGGPLLCAGIAQGIASYVHRNAKPPAVFTRISHYRPWINKILREN.

The signal sequence occupies residues 1-19 (MHLLTLHLLLLLLGSSTKA). Residues 20 to 21 (GE) constitute a propeptide, activation peptide. One can recognise a Peptidase S1 domain in the interval 22–245 (IIGGTECIPH…YRPWINKILR (224 aa)). The cysteines at positions 51 and 67 are disulfide-linked. The active-site Charge relay system is His66. Asn80 carries N-linked (GlcNAc...) asparagine glycosylation. Asp110 (charge relay system) is an active-site residue. 2 cysteine pairs are disulfide-bonded: Cys144–Cys209 and Cys175–Cys188. Catalysis depends on Ser203, which acts as the Charge relay system.

It belongs to the peptidase S1 family. Granzyme subfamily. In terms of tissue distribution, mast cells.

It is found in the secreted. The protein resides in the cytoplasmic granule. It catalyses the reaction Preferential cleavage: Phe-|-Xaa &gt; Tyr-|-Xaa &gt; Trp-|-Xaa &gt; Leu-|-Xaa.. Its function is as follows. Major secreted protease of mast cells with suspected roles in vasoactive peptide generation, extracellular matrix degradation, and regulation of gland secretion. This Mus musculus (Mouse) protein is Chymase (Cma1).